A 224-amino-acid chain; its full sequence is Prolactin-3D1 (224 aa).

Positions 1 to 29 are cleaved as a signal peptide; the sequence is MQLTLNLSGSAGMQLLLLVSSLLLWENVS. 2 disulfide bridges follow: Cys81-Cys199 and Cys216-Cys224. N-linked (GlcNAc...) asparagine glycans are attached at residues Asn109 and Asn158.

This sequence belongs to the somatotropin/prolactin family.

The protein resides in the secreted. The protein is Prolactin-3D1 (Prl3d1) of Mus musculus (Mouse).